A 145-amino-acid polypeptide reads, in one-letter code: ATP synthase epsilon chain (145 aa).

The protein belongs to the ATPase epsilon chain family. As to quaternary structure, F-type ATPases have 2 components, CF(1) - the catalytic core - and CF(0) - the membrane proton channel. CF(1) has five subunits: alpha(3), beta(3), gamma(1), delta(1), epsilon(1). CF(0) has three main subunits: a, b and c.

The protein localises to the cell inner membrane. In terms of biological role, produces ATP from ADP in the presence of a proton gradient across the membrane. This chain is ATP synthase epsilon chain, found in Francisella tularensis subsp. holarctica (strain FTNF002-00 / FTA).